Here is a 272-residue protein sequence, read N- to C-terminus: MKTSVKFETIFPLTTAPLIQCITNEITCESMANALLYIDAKPIMADDPREFPQMFQQTSALVLNLGHLSQEREQSLLAASDYARQVNKLTVVDLVGYGASDIRNEVGEKLVHNQPTVVKGNLSEMRTFCQLVSHGRGVDGSPLDQSEEAIEELIQALRQQTQKFPQTVFLATGIQDVLVSQEQVIVLQNGVPELDCFTGTGDLVGALVAALLGEGNAPMTAAVAAVSYFNLCGEKAKTKSQGLADFRQNTLNQLSLLMKEKDWFEAVKGRVL.

Met-44 is a binding site for substrate. Lys-119 and Thr-172 together coordinate ATP. Gly-199 contacts substrate.

This sequence belongs to the Thz kinase family. Mg(2+) is required as a cofactor.

The enzyme catalyses 5-(2-hydroxyethyl)-4-methylthiazole + ATP = 4-methyl-5-(2-phosphooxyethyl)-thiazole + ADP + H(+). It participates in cofactor biosynthesis; thiamine diphosphate biosynthesis; 4-methyl-5-(2-phosphoethyl)-thiazole from 5-(2-hydroxyethyl)-4-methylthiazole: step 1/1. In terms of biological role, catalyzes the phosphorylation of the hydroxyl group of 4-methyl-5-beta-hydroxyethylthiazole (THZ). The polypeptide is Hydroxyethylthiazole kinase (Enterococcus faecalis (strain ATCC 700802 / V583)).